We begin with the raw amino-acid sequence, 121 residues long: Darcynin homolog (121 aa).

Belongs to the darcynin family.

This Streptomyces avermitilis (strain ATCC 31267 / DSM 46492 / JCM 5070 / NBRC 14893 / NCIMB 12804 / NRRL 8165 / MA-4680) protein is Darcynin homolog.